Consider the following 824-residue polypeptide: Fibroblast growth factor receptor 2 (824 aa).

Residues 1–21 (MFSWSYLMGLVMVATATLSLA) form the signal peptide. At 22 to 374 (RPSYNIAEDT…LDSSSSEYTE (353 aa)) the chain is on the extracellular side. Positions 25–125 (YNIAEDTTLE…ETRYFIVNIT (101 aa)) constitute an Ig-like C2-type 1 domain. A disulfide bridge links Cys62 with Cys107. Asn83, Asn123, and Asn128 each carry an N-linked (GlcNAc...) asparagine glycan. Residues 125–152 (TDGNSSGDDEDDNDGSEDFTNDNNHKRA) form a disordered region. Over residues 131–144 (GDDEDDNDGSEDFT) the composition is skewed to acidic residues. Ig-like C2-type domains follow at residues 153-246 (PYWT…YHLD) and 254-356 (PPIL…AWLT). The interval 160–177 (KLEKKLHAVPAANTVKFR) is heparin-binding. Cys178 and Cys230 are joined by a disulfide. 6 N-linked (GlcNAc...) asparagine glycosylation sites follow: Asn227, Asn240, Asn264, Asn295, Asn316, and Asn329. Residues Cys277 and Cys340 are joined by a disulfide bond. Residues 375 to 395 (IAIYCVGGFLIACMIGTIMMC) traverse the membrane as a helical segment. Residues 396–824 (HMKGRGKKSD…PLKHEATQPA (429 aa)) lie on the Cytoplasmic side of the membrane. Phosphotyrosine; by autocatalysis is present on Tyr463. The Protein kinase domain maps to 478 to 767 (LTLGKPLGEG…LTQTTNEEYL (290 aa)). ATP is bound by residues 484–492 (LGEGCFGQV), Lys514, 562–564 (EYA), and Asn568. Position 583 is a phosphotyrosine; by autocatalysis (Tyr583). Asp623 serves as the catalytic Proton acceptor. 3 positions are modified to phosphotyrosine; by autocatalysis: Tyr653, Tyr654, and Tyr766. The tract at residues 801-824 (SMNLAFPNPNTQMAPLKHEATQPA) is disordered.

Belongs to the protein kinase superfamily. Tyr protein kinase family. Fibroblast growth factor receptor subfamily. In terms of assembly, monomer. Homodimer after ligand binding. Post-translationally, autophosphorylated. Binding of FGF family members together with heparan sulfate proteoglycan or heparin promotes receptor dimerization and autophosphorylation on tyrosine residues. Autophosphorylation occurs in trans between the two FGFR molecules present in the dimer. N-glycosylated in the endoplasmic reticulum. The N-glycan chains undergo further maturation to an Endo H-resistant form in the Golgi apparatus. In terms of processing, ubiquitinated. FGFR2 is rapidly ubiquitinated after autophosphorylation, leading to internalization and degradation. Subject to degradation both in lysosomes and by the proteasome.

It localises to the cell membrane. Its subcellular location is the golgi apparatus. The protein localises to the cytoplasmic vesicle. The catalysed reaction is L-tyrosyl-[protein] + ATP = O-phospho-L-tyrosyl-[protein] + ADP + H(+). Present in an inactive conformation in the absence of bound ligand. Ligand binding leads to dimerization and activation by autophosphorylation on tyrosine residues. In terms of biological role, tyrosine-protein kinase that acts as a cell-surface receptor for fibroblast growth factors and plays an essential role in the regulation of cell proliferation, differentiation, migration and apoptosis, and in the regulation of embryonic development. Required for normal embryonic patterning, limb bud development, lung morphogenesis, osteogenesis and skin development. Plays an essential role in the regulation of osteoblast differentiation, proliferation and apoptosis, and is required for normal skeleton development. Promotes cell proliferation in keratinocytes and immature osteoblasts, but promotes apoptosis in differentiated osteoblasts. Phosphorylates PLCG1, FRS2 and PAK4. Ligand binding leads to the activation of several signaling cascades. Activation of PLCG1 leads to the production of the cellular signaling molecules diacylglycerol and inositol 1,4,5-trisphosphate. Phosphorylation of FRS2 triggers recruitment of GRB2, GAB1, PIK3R1 and SOS1, and mediates activation of RAS, MAPK1/ERK2, MAPK3/ERK1 and the MAP kinase signaling pathway, as well as of the AKT1 signaling pathway. FGFR2 signaling is down-regulated by ubiquitination, internalization and degradation. Mutations that lead to constitutive kinase activation or impair normal FGFR2 maturation, internalization and degradation lead to aberrant signaling. Over-expressed FGFR2 promotes activation of STAT1. The chain is Fibroblast growth factor receptor 2 (FGFR2) from Pleurodeles waltl (Iberian ribbed newt).